The sequence spans 461 residues: Argininosuccinate lyase (461 aa).

This sequence belongs to the lyase 1 family. Argininosuccinate lyase subfamily.

It localises to the cytoplasm. It catalyses the reaction 2-(N(omega)-L-arginino)succinate = fumarate + L-arginine. It functions in the pathway amino-acid biosynthesis; L-arginine biosynthesis; L-arginine from L-ornithine and carbamoyl phosphate: step 3/3. The sequence is that of Argininosuccinate lyase from Aeromonas hydrophila subsp. hydrophila (strain ATCC 7966 / DSM 30187 / BCRC 13018 / CCUG 14551 / JCM 1027 / KCTC 2358 / NCIMB 9240 / NCTC 8049).